A 347-amino-acid polypeptide reads, in one-letter code: Anthranilate phosphoribosyltransferase (347 aa).

Residues Gly-88, 91–92, Thr-96, 98–101, 116–124, and Ser-128 each bind 5-phospho-alpha-D-ribose 1-diphosphate; these read GD, NIST, and KHGNRSVSS. Gly-88 is an anthranilate binding site. Position 100 (Ser-100) interacts with Mg(2+). Asn-119 is a binding site for anthranilate. Arg-174 contributes to the anthranilate binding site. Residues Asp-232 and Glu-233 each contribute to the Mg(2+) site.

It belongs to the anthranilate phosphoribosyltransferase family. Homodimer. It depends on Mg(2+) as a cofactor.

It catalyses the reaction N-(5-phospho-beta-D-ribosyl)anthranilate + diphosphate = 5-phospho-alpha-D-ribose 1-diphosphate + anthranilate. It participates in amino-acid biosynthesis; L-tryptophan biosynthesis; L-tryptophan from chorismate: step 2/5. Catalyzes the transfer of the phosphoribosyl group of 5-phosphorylribose-1-pyrophosphate (PRPP) to anthranilate to yield N-(5'-phosphoribosyl)-anthranilate (PRA). This Shewanella oneidensis (strain ATCC 700550 / JCM 31522 / CIP 106686 / LMG 19005 / NCIMB 14063 / MR-1) protein is Anthranilate phosphoribosyltransferase.